Here is an 80-residue protein sequence, read N- to C-terminus: Trefoil factor 3 (80 aa).

The first 21 residues, 1-21, serve as a signal peptide directing secretion; it reads MEARVLWLLALVLALGSSSLA. The region spanning 30–73 is the P-type domain; that stretch reads NLCAVPAKNRVDCGYPEISPEQCVNRGCCFDSSIPEVPWCFKPL. Disulfide bonds link Cys32–Cys58, Cys42–Cys57, and Cys52–Cys69.

Monomer. Homodimer; disulfide-linked.

The protein resides in the secreted. It localises to the extracellular space. Its subcellular location is the extracellular matrix. It is found in the cytoplasm. Its function is as follows. Involved in the maintenance and repair of the intestinal mucosa. Promotes the mobility of epithelial cells in healing processes (motogen). This Felis catus (Cat) protein is Trefoil factor 3 (TFF3).